A 155-amino-acid chain; its full sequence is Interleukin-2 (155 aa).

The first 20 residues, 1-20 (MYKIQLLSCIALTLALVANG), serve as a signal peptide directing secretion. Threonine 23 is a glycosylation site (O-linked (GalNAc...) threonine). Residues cysteine 79 and cysteine 127 are joined by a disulfide bond.

It belongs to the IL-2 family.

The protein localises to the secreted. Cytokine produced by activated CD4-positive helper T-cells and to a lesser extend activated CD8-positive T-cells and natural killer (NK) cells that plays pivotal roles in the immune response and tolerance. Binds to a receptor complex composed of either the high-affinity trimeric IL-2R (IL2RA/CD25, IL2RB/CD122 and IL2RG/CD132) or the low-affinity dimeric IL-2R (IL2RB and IL2RG). Interaction with the receptor leads to oligomerization and conformation changes in the IL-2R subunits resulting in downstream signaling starting with phosphorylation of JAK1 and JAK3. In turn, JAK1 and JAK3 phosphorylate the receptor to form a docking site leading to the phosphorylation of several substrates including STAT5. This process leads to activation of several pathways including STAT, phosphoinositide-3-kinase/PI3K and mitogen-activated protein kinase/MAPK pathways. Functions as a T-cell growth factor and can increase NK-cell cytolytic activity as well. Promotes strong proliferation of activated B-cells and subsequently immunoglobulin production. Plays a pivotal role in regulating the adaptive immune system by controlling the survival and proliferation of regulatory T-cells, which are required for the maintenance of immune tolerance. Moreover, participates in the differentiation and homeostasis of effector T-cell subsets, including Th1, Th2, Th17 as well as memory CD8-positive T-cells. The polypeptide is Interleukin-2 (IL2) (Bos taurus (Bovine)).